The sequence spans 223 residues: Octanoyltransferase (223 aa).

The region spanning 30–214 (DLDRDCFLLT…IVADLFGEFT (185 aa)) is the BPL/LPL catalytic domain. Residues 75 to 82 (RGGEITYH), 144 to 146 (SIG), and 157 to 159 (GFA) contribute to the substrate site. Cys175 acts as the Acyl-thioester intermediate in catalysis.

The protein belongs to the LipB family.

The protein resides in the cytoplasm. The enzyme catalyses octanoyl-[ACP] + L-lysyl-[protein] = N(6)-octanoyl-L-lysyl-[protein] + holo-[ACP] + H(+). The protein operates within protein modification; protein lipoylation via endogenous pathway; protein N(6)-(lipoyl)lysine from octanoyl-[acyl-carrier-protein]: step 1/2. Catalyzes the transfer of endogenously produced octanoic acid from octanoyl-acyl-carrier-protein onto the lipoyl domains of lipoate-dependent enzymes. Lipoyl-ACP can also act as a substrate although octanoyl-ACP is likely to be the physiological substrate. The chain is Octanoyltransferase from Desulfotalea psychrophila (strain LSv54 / DSM 12343).